Here is a 335-residue protein sequence, read N- to C-terminus: Probable cytosolic iron-sulfur protein assembly protein Ciao1 (335 aa).

7 WD repeats span residues 12 to 51 (GHKG…WSTK), 57 to 96 (GHKR…FECN), 101 to 140 (GHEN…EFEC), 146 to 185 (AHTQ…SDWD), 192 to 231 (SHTS…NDAG), 250 to 289 (QHSR…KRDE), and 301 to 335 (AHEQ…KVDD).

Belongs to the WD repeat CIA1 family.

Its function is as follows. Essential component of the cytosolic iron-sulfur (Fe/S) protein assembly machinery. Required for the maturation of extramitochondrial Fe/S proteins. The sequence is that of Probable cytosolic iron-sulfur protein assembly protein Ciao1 from Drosophila pseudoobscura pseudoobscura (Fruit fly).